The sequence spans 247 residues: Sugar fermentation stimulation protein homolog (247 aa).

The protein belongs to the SfsA family.

In Methylorubrum populi (strain ATCC BAA-705 / NCIMB 13946 / BJ001) (Methylobacterium populi), this protein is Sugar fermentation stimulation protein homolog.